The chain runs to 183 residues: Putative ribosomal N-acetyltransferase YdaF (183 aa).

The region spanning 10-176 is the N-acetyltransferase domain; that stretch reads ITIRLLEPKD…HDLVYYSLLK (167 aa).

This sequence belongs to the acetyltransferase family. In terms of assembly, homohexamer, and homodimer.

Functionally, putative N-acetyltransferase. May act on ribosomal proteins (Potential). This is Putative ribosomal N-acetyltransferase YdaF (ydaF) from Bacillus subtilis (strain 168).